A 253-amino-acid polypeptide reads, in one-letter code: uncharacterized protein (253 aa).

An N-terminal signal peptide occupies residues 1-16 (MCVVYRTSVLILLASG). Cys-17 is lipidated: N-palmitoyl cysteine. A lipid anchor (S-diacylglycerol cysteine) is attached at Cys-17.

It belongs to the staphylococcal tandem lipoprotein family.

The protein resides in the cell membrane. This is an uncharacterized protein from Staphylococcus aureus (strain N315).